The primary structure comprises 389 residues: MPIKSFASRLALSLAICGTAMGQKVNGADYNKPDGGPPAKFFQASSSIPVAAIQAAAAKASKVPSHATYPIGQGSTKSTIHSDWAGFSEGAAFSFIADMDVDCDGLNHGCKGNPDGQKETNWGALSAYEVPFIVIPQEFLDANKGTLKGNAVAAVICATSSNGKMFYGIFGDSNGDSPQVTGEASWLMARTCFPEEDLNGNKGHTAADVTYIVFTGDKAVLPSSALNKNYITNFDTLRSMGDSLVGALAKNLNLGGGGGNPPTTLTTTSIPEPTGGSGSCSWPGHCAGFKNKGATCSSNDDCSDDLACQNGKCASDGSAETCSWEGHCKGATCSSNDDCSDELACISGICSVDNGVETCEWEGHCEGASCSSHDDCDGNLACKNGKCSA.

The first 22 residues, 1–22 (MPIKSFASRLALSLAICGTAMG), serve as a signal peptide directing secretion. The stretch at 280 to 313 (CSWPGHCAGFKNKGATCSSNDDCSDDLACQNGKC) is one R3-1 repeat. The stretch at 320 to 350 (ETCSWEGHCKGATCSSNDDCSDELACISGIC) is one R3-2 repeat. The R3-3 repeat unit spans residues 357-387 (ETCEWEGHCEGASCSSHDDCDGNLACKNGKC).

Belongs to the glycosyl hydrolase 75 family.

It localises to the secreted. The enzyme catalyses Endohydrolysis of beta-(1-&gt;4)-linkages between D-glucosamine residues in a partly acetylated chitosan.. Functionally, chitosanase catalyzing the endo-type cleavage of chitosan, the deacylated form of chitin. Chitosanase may be crucial in the degradation of the deacetylated portion of chitin in the fungal cell wall. Chitoolisaccharides produced by the hydrolysis of partially N-acetylated chitosan are known to have many biological activities, including antibacterial activity, immune-enhancing effects, and elicitor activity. The chain is Endo-chitosanase C (csnC) from Aspergillus oryzae (strain ATCC 42149 / RIB 40) (Yellow koji mold).